Here is a 289-residue protein sequence, read N- to C-terminus: Lipoyl synthase 1 (289 aa).

7 residues coordinate [4Fe-4S] cluster: Cys33, Cys38, Cys44, Cys59, Cys63, Cys66, and Ser274. Positions 45 to 263 (FAGGTATFLI…RIGEEELGFL (219 aa)) constitute a Radical SAM core domain.

This sequence belongs to the radical SAM superfamily. Lipoyl synthase family. The cofactor is [4Fe-4S] cluster.

It is found in the cytoplasm. The catalysed reaction is [[Fe-S] cluster scaffold protein carrying a second [4Fe-4S](2+) cluster] + N(6)-octanoyl-L-lysyl-[protein] + 2 oxidized [2Fe-2S]-[ferredoxin] + 2 S-adenosyl-L-methionine + 4 H(+) = [[Fe-S] cluster scaffold protein] + N(6)-[(R)-dihydrolipoyl]-L-lysyl-[protein] + 4 Fe(3+) + 2 hydrogen sulfide + 2 5'-deoxyadenosine + 2 L-methionine + 2 reduced [2Fe-2S]-[ferredoxin]. The protein operates within protein modification; protein lipoylation via endogenous pathway; protein N(6)-(lipoyl)lysine from octanoyl-[acyl-carrier-protein]: step 2/2. In terms of biological role, catalyzes the radical-mediated insertion of two sulfur atoms into the C-6 and C-8 positions of the octanoyl moiety bound to the lipoyl domains of lipoate-dependent enzymes, thereby converting the octanoylated domains into lipoylated derivatives. This Parasynechococcus marenigrum (strain WH8102) protein is Lipoyl synthase 1.